The sequence spans 212 residues: Endonuclease III (212 aa).

Residues 108–127 (FKELVKLPGVGRKTANVVLN) enclose the HhH domain. Positions 187, 194, 197, and 203 each coordinate [4Fe-4S] cluster.

This sequence belongs to the Nth/MutY family. The cofactor is [4Fe-4S] cluster.

It catalyses the reaction 2'-deoxyribonucleotide-(2'-deoxyribose 5'-phosphate)-2'-deoxyribonucleotide-DNA = a 3'-end 2'-deoxyribonucleotide-(2,3-dehydro-2,3-deoxyribose 5'-phosphate)-DNA + a 5'-end 5'-phospho-2'-deoxyribonucleoside-DNA + H(+). Its function is as follows. DNA repair enzyme that has both DNA N-glycosylase activity and AP-lyase activity. The DNA N-glycosylase activity releases various damaged pyrimidines from DNA by cleaving the N-glycosidic bond, leaving an AP (apurinic/apyrimidinic) site. The AP-lyase activity cleaves the phosphodiester bond 3' to the AP site by a beta-elimination, leaving a 3'-terminal unsaturated sugar and a product with a terminal 5'-phosphate. This is Endonuclease III from Rickettsia prowazekii (strain Madrid E).